A 446-amino-acid chain; its full sequence is Choline monooxygenase, chloroplastic (446 aa).

The N-terminal 65 residues, 1-65, are a transit peptide targeting the chloroplast; that stretch reads MAASATTMLL…NTSTNKIITK (65 aa). The region spanning 127–234 is the Rieske domain; that stretch reads WQVAGYSEQV…VAEWGPFILI (108 aa). Residues C169, H171, C188, and H191 each coordinate [2Fe-2S] cluster. Residues H294 and H299 each coordinate Fe cation.

This sequence belongs to the choline monooxygenase family. The cofactor is [2Fe-2S] cluster. Requires Fe cation as cofactor. Mg(2+) is required as a cofactor. As to expression, expressed in roots and leaves.

It localises to the plastid. The protein localises to the chloroplast stroma. It carries out the reaction choline + 2 reduced [2Fe-2S]-[ferredoxin] + O2 + 2 H(+) = betaine aldehyde hydrate + 2 oxidized [2Fe-2S]-[ferredoxin] + H2O. Its pathway is amine and polyamine biosynthesis; betaine biosynthesis via choline pathway; betaine aldehyde from choline (monooxygenase route): step 1/1. Its function is as follows. Catalyzes the first step of the osmoprotectant glycine betaine synthesis. In Beta vulgaris (Sugar beet), this protein is Choline monooxygenase, chloroplastic (CMO).